Reading from the N-terminus, the 122-residue chain is Small ribosomal subunit protein uS13 (122 aa).

Over residues P97–S114 the composition is skewed to basic residues. The tract at residues P97–E122 is disordered.

This sequence belongs to the universal ribosomal protein uS13 family. As to quaternary structure, part of the 30S ribosomal subunit. Forms a loose heterodimer with protein S19. Forms two bridges to the 50S subunit in the 70S ribosome.

Its function is as follows. Located at the top of the head of the 30S subunit, it contacts several helices of the 16S rRNA. In the 70S ribosome it contacts the 23S rRNA (bridge B1a) and protein L5 of the 50S subunit (bridge B1b), connecting the 2 subunits; these bridges are implicated in subunit movement. Contacts the tRNAs in the A and P-sites. The protein is Small ribosomal subunit protein uS13 of Wolbachia sp. subsp. Brugia malayi (strain TRS).